Here is a 154-residue protein sequence, read N- to C-terminus: MSNKFVITWDNMQTYCRQLAEKQMPAEQWKGIWAVSRGGLVPGAILARELGIRHVDTICISSYDHDHQRDMTVVKAPEGDGEGFLIVEDLVDSGDTARKLREMYPKAKLIAVCAKPSGADLLDEYIVDIAQDTWIEQPWDTSLSYVEPVNRKSK.

5-phospho-alpha-D-ribose 1-diphosphate contacts are provided by residues 37-38, Arg-69, and 88-96; these read RG and EDLVDSGDT. Arg-69 contacts GMP. Asp-89 serves as a coordination point for Mg(2+). Guanine contacts are provided by Asp-92 and Ile-135. Asp-92 and Ile-135 together coordinate xanthine. Residues 92–96 and 134–135 each bind GMP; these read DSGDT and WI.

This sequence belongs to the purine/pyrimidine phosphoribosyltransferase family. XGPT subfamily. Homotetramer. It depends on Mg(2+) as a cofactor.

The protein localises to the cell inner membrane. The catalysed reaction is GMP + diphosphate = guanine + 5-phospho-alpha-D-ribose 1-diphosphate. It catalyses the reaction XMP + diphosphate = xanthine + 5-phospho-alpha-D-ribose 1-diphosphate. The enzyme catalyses IMP + diphosphate = hypoxanthine + 5-phospho-alpha-D-ribose 1-diphosphate. It functions in the pathway purine metabolism; GMP biosynthesis via salvage pathway; GMP from guanine: step 1/1. The protein operates within purine metabolism; XMP biosynthesis via salvage pathway; XMP from xanthine: step 1/1. Its function is as follows. Purine salvage pathway enzyme that catalyzes the transfer of the ribosyl-5-phosphate group from 5-phospho-alpha-D-ribose 1-diphosphate (PRPP) to the N9 position of the 6-oxopurines guanine and xanthine to form the corresponding ribonucleotides GMP (guanosine 5'-monophosphate) and XMP (xanthosine 5'-monophosphate), with the release of PPi. To a lesser extent, also acts on hypoxanthine. The protein is Xanthine-guanine phosphoribosyltransferase of Vibrio atlanticus (strain LGP32) (Vibrio splendidus (strain Mel32)).